The following is a 239-amino-acid chain: Tungstate uptake system permease protein TupB (239 aa).

Positions 37 to 233 (IKTTLLSSSI…LIAFCLNFIT (197 aa)) constitute an ABC transmembrane type-1 domain. Transmembrane regions (helical) follow at residues 45–65 (SISI…LGFF), 76–96 (IVDT…YALI), 114–134 (LILG…SNLI), 168–188 (ISVV…AMIV), and 212–232 (FASG…LNFI).

It belongs to the binding-protein-dependent transport system permease family. The complex is composed of two ATP-binding proteins (TupC), two transmembrane proteins (TupB) and a solute-binding protein (TupA).

It localises to the cell inner membrane. Its function is as follows. Part of an ABC transporter complex involved in ultra-high affinity tungstate uptake. Probably responsible for the translocation of the substrate across the membrane. This Campylobacter jejuni subsp. jejuni serotype O:2 (strain ATCC 700819 / NCTC 11168) protein is Tungstate uptake system permease protein TupB.